The primary structure comprises 590 residues: Aspartate--tRNA(Asp/Asn) ligase (590 aa).

E175 contacts L-aspartate. Residues 199 to 202 (QQYK) are aspartate. Residues R221 and H450 each contribute to the L-aspartate site. 221–223 (RDE) contributes to the ATP binding site. Position 484 (E484) interacts with ATP. Residue R491 participates in L-aspartate binding. 536–539 (GVDR) contributes to the ATP binding site.

It belongs to the class-II aminoacyl-tRNA synthetase family. Type 1 subfamily. In terms of assembly, homodimer.

The protein localises to the cytoplasm. It catalyses the reaction tRNA(Asx) + L-aspartate + ATP = L-aspartyl-tRNA(Asx) + AMP + diphosphate. Aspartyl-tRNA synthetase with relaxed tRNA specificity since it is able to aspartylate not only its cognate tRNA(Asp) but also tRNA(Asn). Reaction proceeds in two steps: L-aspartate is first activated by ATP to form Asp-AMP and then transferred to the acceptor end of tRNA(Asp/Asn). In Rhodopseudomonas palustris (strain BisB18), this protein is Aspartate--tRNA(Asp/Asn) ligase.